Consider the following 801-residue polypeptide: Ferredoxin:CoB-CoM heterodisulfide reductase subunit A (801 aa).

Residue 149-172 (GGGIAGITAALNLADNGVSTVLVE) participates in FAD binding. 4Fe-4S ferredoxin-type domains are found at residues 239–269 (KKPR…FNCG) and 285–320 (PKIY…FSQK). Positions 248, 251, 254, 258, 295, 303, 306, and 310 each coordinate [4Fe-4S] cluster. The disordered stretch occupies residues 382–409 (FSKASSDPTPATCDSRCEDSSDESQGTD). 4Fe-4S ferredoxin-type domains lie at 606–634 (EIAT…VNES) and 635–664 (GRVV…IAGF). [4Fe-4S] cluster contacts are provided by Cys-615, Cys-618, Cys-621, Cys-624, Cys-644, Cys-647, Cys-650, and Cys-654.

Belongs to the HdrA family. In terms of assembly, the ferredoxin:CoB-CoM heterodisulfide reductase is composed of three subunits; HdrA1, HdrB1 and HdrC1. [4Fe-4S] cluster serves as cofactor. The cofactor is FAD.

The protein resides in the cytoplasm. The enzyme catalyses coenzyme B + coenzyme M + 2 oxidized [2Fe-2S]-[ferredoxin] = coenzyme M-coenzyme B heterodisulfide + 2 reduced [2Fe-2S]-[ferredoxin] + 2 H(+). It participates in cofactor metabolism; coenzyme M-coenzyme B heterodisulfide reduction; coenzyme B and coenzyme M from coenzyme M-coenzyme B heterodisulfide: step 1/1. Functionally, part of a complex that catalyzes the reversible reduction of CoM-S-S-CoB to the thiol-coenzymes H-S-CoM (coenzyme M) and H-S-CoB (coenzyme B). Probably involved in methylotrophic methanogenesis but not in aceticlastic methanogenesis. The polypeptide is Ferredoxin:CoB-CoM heterodisulfide reductase subunit A (Methanosarcina acetivorans (strain ATCC 35395 / DSM 2834 / JCM 12185 / C2A)).